Here is a 251-residue protein sequence, read N- to C-terminus: MSMPNIVPPAEVRTEGLSLEEYDEEQVRLMEERCILVNPDDVAYGEASKKTCHLMSNINAPKDLLHRAFSVFLFRPSDGALLLQRRADEKITFPGMWTNTCCSHPLSIKGEVKEENQIGVRRAASRKLEHELGVPTSSTPPDSFTYLTRIHYLAPSDGLWGEHEIDYILFSTTPTEHTGNPNEVSDTRYVTKPELQAMFEDESNSFTPWFKLIARDFLFGWWDQLLARRNEKGEVDAKSLEDLSDNKVWKM.

Position 49 (Lys-49) interacts with substrate. 2 residues coordinate Mg(2+): His-53 and His-66. The Nudix hydrolase domain maps to 64-212 (LLHRAFSVFL…SNSFTPWFKL (149 aa)). 2 residues coordinate substrate: Arg-86 and Lys-90. Residue Cys-102 is part of the active site. Ser-103 serves as a coordination point for substrate. Mg(2+) contacts are provided by Glu-162 and Glu-164. The active site involves Glu-164.

This sequence belongs to the IPP isomerase type 1 family. Mg(2+) is required as a cofactor.

Its subcellular location is the cytoplasm. The catalysed reaction is isopentenyl diphosphate = dimethylallyl diphosphate. It participates in isoprenoid biosynthesis; dimethylallyl diphosphate biosynthesis; dimethylallyl diphosphate from isopentenyl diphosphate: step 1/1. Functionally, isopentenyl-diphosphate delta-isomerase; part of the second module of ergosterol biosynthesis pathway that includes the middle steps of the pathway. The second module is carried out in the vacuole and involves the formation of farnesyl diphosphate, which is also an important intermediate in the biosynthesis of ubiquinone, dolichol, heme and prenylated proteins. Activity by the mevalonate kinase first converts mevalonate into 5-phosphomevalonate. 5-phosphomevalonate is then further converted to 5-diphosphomevalonate by the phosphomevalonate kinase. The diphosphomevalonate decarboxylase then produces isopentenyl diphosphate. The isopentenyl-diphosphate delta-isomerase then catalyzes the 1,3-allylic rearrangement of the homoallylic substrate isopentenyl (IPP) to its highly electrophilic allylic isomer, dimethylallyl diphosphate (DMAPP). Finally the farnesyl diphosphate synthase catalyzes the sequential condensation of isopentenyl pyrophosphate with dimethylallyl pyrophosphate, and then with the resultant geranylpyrophosphate to the ultimate product farnesyl pyrophosphate. This chain is Isopentenyl-diphosphate delta-isomerase, found in Phaffia rhodozyma (Yeast).